The following is a 194-amino-acid chain: Ribonuclease VapC1 (194 aa).

The region spanning 34 to 134 is the PINc domain; the sequence is YVIDTSAIIS…TDDYSIQNVA (101 aa). Positions 37 and 150 each coordinate Mg(2+).

This sequence belongs to the PINc/VapC protein family. The cofactor is Mg(2+).

Functionally, toxic component of a type II toxin-antitoxin (TA) system. An RNase. This chain is Ribonuclease VapC1, found in Thermoplasma acidophilum (strain ATCC 25905 / DSM 1728 / JCM 9062 / NBRC 15155 / AMRC-C165).